The chain runs to 328 residues: Tyrosine--tRNA ligase (328 aa).

Tyr-33 contributes to the L-tyrosine binding site. The 'HIGH' region signature appears at 38-46 (PSGVLHIGH). The L-tyrosine site is built by Tyr-154, Gln-158, Asp-161, and Gln-176. The tract at residues 193 to 227 (EPPTSLHTPLIADLGTGRGKMSSSEGVTISMEDSR) is disordered. The 'KMSKS' region signature appears at 212-216 (KMSSS). ATP is bound at residue Ser-215.

Belongs to the class-I aminoacyl-tRNA synthetase family. TyrS type 3 subfamily. As to quaternary structure, homodimer.

It localises to the cytoplasm. It catalyses the reaction tRNA(Tyr) + L-tyrosine + ATP = L-tyrosyl-tRNA(Tyr) + AMP + diphosphate + H(+). Catalyzes the attachment of tyrosine to tRNA(Tyr) in a two-step reaction: tyrosine is first activated by ATP to form Tyr-AMP and then transferred to the acceptor end of tRNA(Tyr). This Halorubrum lacusprofundi (strain ATCC 49239 / DSM 5036 / JCM 8891 / ACAM 34) protein is Tyrosine--tRNA ligase.